A 610-amino-acid chain; its full sequence is Dopamine beta-hydroxylase (610 aa).

Topologically, residues 1-9 are cytoplasmic; that stretch reads MKVPSPSVR. Residues 10-30 form a helical; Signal-anchor for type II membrane protein membrane-spanning segment; sequence EAASMYGTAVAIFLVILVAAL. Residues 31-610 lie on the Intragranular side of the membrane; that stretch reads QGSEPPESPF…TVVDIGGGKG (580 aa). A DOMON domain is found at 50 to 166; it reads GTLELSWNVS…GTVHLVYGIL (117 aa). N-linked (GlcNAc...) asparagine glycosylation is found at N57, N177, and N194. 6 cysteine pairs are disulfide-bonded: C147/C589, C225/C276, C262/C288, C383/C496, C387/C558, and C459/C481. Y223 is a catalytic residue. Cu(2+) is bound by residues H255 and H256. H326, H405, H407, and M480 together coordinate Cu(2+). H405 is an active-site residue. Residues 586–610 are disordered; sequence TPRCPASRGRSPAGPTVVDIGGGKG.

The protein belongs to the copper type II ascorbate-dependent monooxygenase family. Homotetramer; composed of two disulfide-linked dimers. The cofactor is Cu(2+). In terms of processing, proteolytic cleavage after the membrane-anchor leads to the release of the soluble form. Post-translationally, N-glycosylated. In terms of tissue distribution, detected in adrenal medulla chromaffin cells.

The protein localises to the cytoplasmic vesicle. Its subcellular location is the secretory vesicle lumen. The protein resides in the secretory vesicle. It is found in the chromaffin granule lumen. It localises to the secreted. The protein localises to the secretory vesicle membrane. Its subcellular location is the chromaffin granule membrane. The enzyme catalyses dopamine + 2 L-ascorbate + O2 = (R)-noradrenaline + 2 monodehydro-L-ascorbate radical + H2O. It functions in the pathway catecholamine biosynthesis; (R)-noradrenaline biosynthesis; (R)-noradrenaline from dopamine: step 1/1. Catalyzes the hydroxylation of dopamine to noradrenaline (also known as norepinephrine), and is thus vital for regulation of these neurotransmitters. This Equus caballus (Horse) protein is Dopamine beta-hydroxylase (DBH).